An 89-amino-acid polypeptide reads, in one-letter code: Small ribosomal subunit protein uS15 (89 aa).

Belongs to the universal ribosomal protein uS15 family. As to quaternary structure, part of the 30S ribosomal subunit. Forms a bridge to the 50S subunit in the 70S ribosome, contacting the 23S rRNA.

Its function is as follows. One of the primary rRNA binding proteins, it binds directly to 16S rRNA where it helps nucleate assembly of the platform of the 30S subunit by binding and bridging several RNA helices of the 16S rRNA. Forms an intersubunit bridge (bridge B4) with the 23S rRNA of the 50S subunit in the ribosome. In Bifidobacterium longum subsp. infantis (strain ATCC 15697 / DSM 20088 / JCM 1222 / NCTC 11817 / S12), this protein is Small ribosomal subunit protein uS15.